A 472-amino-acid chain; its full sequence is Adenosylhomocysteinase (472 aa).

The substrate site is built by Thr-63, Asp-138, and Glu-198. 199–201 lines the NAD(+) pocket; that stretch reads TTT. Substrate is bound by residues Lys-228 and Asp-232. NAD(+) contacts are provided by residues Asn-233, 262-267, Glu-285, Asn-320, 341-343, and Asn-386; these read GYGDVG and IGH.

Belongs to the adenosylhomocysteinase family. NAD(+) serves as cofactor.

The protein resides in the cytoplasm. It catalyses the reaction S-adenosyl-L-homocysteine + H2O = L-homocysteine + adenosine. It participates in amino-acid biosynthesis; L-homocysteine biosynthesis; L-homocysteine from S-adenosyl-L-homocysteine: step 1/1. Functionally, may play a key role in the regulation of the intracellular concentration of adenosylhomocysteine. The polypeptide is Adenosylhomocysteinase (Methylococcus capsulatus (strain ATCC 33009 / NCIMB 11132 / Bath)).